The following is a 445-amino-acid chain: MNATEMENVSIRRLDSSDPRFAQALREVLAFEAGEDEAIDRAVAQILADVKDRGDAAVLEYTQRFDRVEAASMGALEISQSELEAALEDLEPKRRAALEAAAARVRAYHEKQKIECGSHSWEYTEADGTMLGQKVTPLDRVGIYVPGGKAAYPSSVLMNAIPARVAGVKEIIMVVPTPGGVRNELVLAAAQIAGVDRVFTIGGAQAVGALAYGTATLPQVDKIVGPGNAYVAAAKRRVFGTVGIDMIAGPSEILVICDGTTDPDWVAMDLFSQAEHDELAQSILLCPDADYIAQVEASIQRQLDSMPRREVIAASISGRGALIKVRDMEEACEIANAIAPEHLEISAENPRQWSEKIRHAGAIFLGRYTSESLGDYCAGPNHVLPTSRTARFSSPLGVYDFQKRSSLIEVSEGGAQMLGQIAAELAYGEGLQAHARSAEYRFKRS.

Residues Y144, Q205, and N228 each coordinate NAD(+). Substrate is bound by residues S251, Q273, and H276. Positions 273 and 276 each coordinate Zn(2+). Catalysis depends on proton acceptor residues E341 and H342. Residues H342, D375, E429, and H434 each contribute to the substrate site. Position 375 (D375) interacts with Zn(2+). Residue H434 coordinates Zn(2+).

The protein belongs to the histidinol dehydrogenase family. Zn(2+) is required as a cofactor.

The catalysed reaction is L-histidinol + 2 NAD(+) + H2O = L-histidine + 2 NADH + 3 H(+). The protein operates within amino-acid biosynthesis; L-histidine biosynthesis; L-histidine from 5-phospho-alpha-D-ribose 1-diphosphate: step 9/9. In terms of biological role, catalyzes the sequential NAD-dependent oxidations of L-histidinol to L-histidinaldehyde and then to L-histidine. The sequence is that of Histidinol dehydrogenase from Cupriavidus pinatubonensis (strain JMP 134 / LMG 1197) (Cupriavidus necator (strain JMP 134)).